Consider the following 312-residue polypeptide: tRNA dimethylallyltransferase (312 aa).

15–22 (GPTAAGKS) contributes to the ATP binding site. Residue 17-22 (TAAGKS) participates in substrate binding. Residues 40-43 (DSMQ) form an interaction with substrate tRNA region.

It belongs to the IPP transferase family. Monomer. Requires Mg(2+) as cofactor.

The enzyme catalyses adenosine(37) in tRNA + dimethylallyl diphosphate = N(6)-dimethylallyladenosine(37) in tRNA + diphosphate. Its function is as follows. Catalyzes the transfer of a dimethylallyl group onto the adenine at position 37 in tRNAs that read codons beginning with uridine, leading to the formation of N6-(dimethylallyl)adenosine (i(6)A). This Streptomyces coelicolor (strain ATCC BAA-471 / A3(2) / M145) protein is tRNA dimethylallyltransferase.